Here is a 99-residue protein sequence, read N- to C-terminus: Aspartyl/glutamyl-tRNA(Asn/Gln) amidotransferase subunit C (99 aa).

The protein belongs to the GatC family. Heterotrimer of A, B and C subunits.

It carries out the reaction L-glutamyl-tRNA(Gln) + L-glutamine + ATP + H2O = L-glutaminyl-tRNA(Gln) + L-glutamate + ADP + phosphate + H(+). The catalysed reaction is L-aspartyl-tRNA(Asn) + L-glutamine + ATP + H2O = L-asparaginyl-tRNA(Asn) + L-glutamate + ADP + phosphate + 2 H(+). Functionally, allows the formation of correctly charged Asn-tRNA(Asn) or Gln-tRNA(Gln) through the transamidation of misacylated Asp-tRNA(Asn) or Glu-tRNA(Gln) in organisms which lack either or both of asparaginyl-tRNA or glutaminyl-tRNA synthetases. The reaction takes place in the presence of glutamine and ATP through an activated phospho-Asp-tRNA(Asn) or phospho-Glu-tRNA(Gln). The protein is Aspartyl/glutamyl-tRNA(Asn/Gln) amidotransferase subunit C of Albidiferax ferrireducens (strain ATCC BAA-621 / DSM 15236 / T118) (Rhodoferax ferrireducens).